The chain runs to 264 residues: 3-methyl-2-oxobutanoate hydroxymethyltransferase (264 aa).

Mg(2+)-binding residues include aspartate 45 and aspartate 84. Residues aspartate 45–serine 46, aspartate 84, and lysine 112 each bind 3-methyl-2-oxobutanoate. A Mg(2+)-binding site is contributed by glutamate 114. Residue glutamate 181 is the Proton acceptor of the active site.

This sequence belongs to the PanB family. Homodecamer; pentamer of dimers. The cofactor is Mg(2+).

It localises to the cytoplasm. It catalyses the reaction 3-methyl-2-oxobutanoate + (6R)-5,10-methylene-5,6,7,8-tetrahydrofolate + H2O = 2-dehydropantoate + (6S)-5,6,7,8-tetrahydrofolate. It participates in cofactor biosynthesis; (R)-pantothenate biosynthesis; (R)-pantoate from 3-methyl-2-oxobutanoate: step 1/2. Its function is as follows. Catalyzes the reversible reaction in which hydroxymethyl group from 5,10-methylenetetrahydrofolate is transferred onto alpha-ketoisovalerate to form ketopantoate. In Shewanella piezotolerans (strain WP3 / JCM 13877), this protein is 3-methyl-2-oxobutanoate hydroxymethyltransferase.